A 213-amino-acid polypeptide reads, in one-letter code: DNA-directed RNA polymerase subunit alpha (213 aa).

It belongs to the RNA polymerase alpha chain family. In plastids the minimal PEP RNA polymerase catalytic core is composed of four subunits: alpha, beta, beta', and beta''. When a (nuclear-encoded) sigma factor is associated with the core the holoenzyme is formed, which can initiate transcription.

It localises to the plastid. It is found in the chloroplast. The enzyme catalyses RNA(n) + a ribonucleoside 5'-triphosphate = RNA(n+1) + diphosphate. DNA-dependent RNA polymerase catalyzes the transcription of DNA into RNA using the four ribonucleoside triphosphates as substrates. This is DNA-directed RNA polymerase subunit alpha (rpoA) from Euglena stellata.